Consider the following 314-residue polypeptide: Mitochondrial MRF1 N(5)-glutamine methyltransferase MTQ1 (314 aa).

S-adenosyl-L-methionine-binding positions include 118-122, aspartate 141, and asparagine 188; that span reads FTGTG. Residue 188–191 participates in substrate binding; it reads NPPY.

This sequence belongs to the protein N5-glutamine methyltransferase family.

The protein resides in the mitochondrion. The catalysed reaction is L-glutaminyl-[peptide chain release factor] + S-adenosyl-L-methionine = N(5)-methyl-L-glutaminyl-[peptide chain release factor] + S-adenosyl-L-homocysteine + H(+). Methylates MRF1 on 'Gln-287' using S-adenosyl L-methionine as methyl donor. This Saccharomyces cerevisiae (strain ATCC 204508 / S288c) (Baker's yeast) protein is Mitochondrial MRF1 N(5)-glutamine methyltransferase MTQ1 (MTQ1).